A 458-amino-acid chain; its full sequence is uncharacterized protein (458 aa).

Over residues 1–10 the composition is skewed to basic and acidic residues; it reads MQAEPKKSQA. A disordered region spans residues 1–20; sequence MQAEPKKSQAEQRAVAEPVS. In terms of domain architecture, TRAM spans 23–84; it reads VSLVGEEYEV…ARFLRADAVE (62 aa). [4Fe-4S] cluster contacts are provided by Cys97, Cys105, Cys108, and Cys193. Residues Gln287, Tyr316, Glu340, and Asp384 each coordinate S-adenosyl-L-methionine. The active-site Nucleophile is Cys411.

The protein belongs to the class I-like SAM-binding methyltransferase superfamily. RNA M5U methyltransferase family.

This is an uncharacterized protein from Streptomyces coelicolor (strain ATCC BAA-471 / A3(2) / M145).